We begin with the raw amino-acid sequence, 450 residues long: Serine incorporator 2 (450 aa).

The next 11 helical transmembrane spans lie at 5 to 27, 40 to 57, 96 to 118, 131 to 150, 160 to 182, 203 to 225, 238 to 257, 264 to 286, 315 to 337, 380 to 402, and 417 to 439; these read LGAC…ILCG, LLFT…IIML, AVYR…MICV, GFWF…AFYI, FYFG…VDFA, AGLF…LMFV, VFIS…AVLP, PNSG…WSAL, VWWD…FISL, TYSY…MTLT, and WTSV…WTLV.

This sequence belongs to the TDE1 family.

It is found in the cell membrane. It catalyses the reaction a 1,2-diacyl-sn-glycero-3-phospho-L-serine(in) = a 1,2-diacyl-sn-glycero-3-phospho-L-serine(out). The enzyme catalyses a 1,2-diacyl-sn-glycero-3-phosphocholine(in) = a 1,2-diacyl-sn-glycero-3-phosphocholine(out). It carries out the reaction a 1,2-diacyl-sn-glycero-3-phosphoethanolamine(in) = a 1,2-diacyl-sn-glycero-3-phosphoethanolamine(out). Functionally, non-ATP-dependent, non-specific lipid transporter for phosphatidylserine, phosphatidylcholine, and phosphatidylethanolamine. Functions as a scramblase that flips lipids in both directions across the membrane. In contrast to SERINC3 and SERINC5, has no effect on gammaretrovirus particles infectivity. This Mus musculus (Mouse) protein is Serine incorporator 2 (Serinc2).